The following is a 154-amino-acid chain: MKTFSAKPAEVTKKWVIIDATGLVVGRLATLVAMRLRGKHLPTYTPHVDCGDNVIIINASKVVLTGRKRDNKVYYHHTGFIGGIKERSAKAILEGRFPERVVEKAIERMIPRGPLGRVQMGNLRVYPGAEHPHEAQQPEKLDIGAMNRKNMRAA.

It belongs to the universal ribosomal protein uL13 family. In terms of assembly, part of the 50S ribosomal subunit.

In terms of biological role, this protein is one of the early assembly proteins of the 50S ribosomal subunit, although it is not seen to bind rRNA by itself. It is important during the early stages of 50S assembly. The protein is Large ribosomal subunit protein uL13 of Rhodopseudomonas palustris (strain ATCC BAA-98 / CGA009).